The following is a 397-amino-acid chain: S-adenosylmethionine synthase (397 aa).

His17 is an ATP binding site. Asp19 provides a ligand contact to Mg(2+). Residue Glu45 coordinates K(+). L-methionine is bound by residues Glu58 and Gln101. A flexible loop region spans residues 101 to 111; it reads QSPDIAQGVDK. Residues 176-178, 243-244, Asp252, 258-259, and Lys279 contribute to the ATP site; these read DGK, RF, and RK. L-methionine is bound at residue Asp252. L-methionine is bound at residue Lys283.

This sequence belongs to the AdoMet synthase family. Homotetramer; dimer of dimers. Mg(2+) is required as a cofactor. Requires K(+) as cofactor.

It localises to the cytoplasm. It catalyses the reaction L-methionine + ATP + H2O = S-adenosyl-L-methionine + phosphate + diphosphate. It participates in amino-acid biosynthesis; S-adenosyl-L-methionine biosynthesis; S-adenosyl-L-methionine from L-methionine: step 1/1. Catalyzes the formation of S-adenosylmethionine (AdoMet) from methionine and ATP. The overall synthetic reaction is composed of two sequential steps, AdoMet formation and the subsequent tripolyphosphate hydrolysis which occurs prior to release of AdoMet from the enzyme. The chain is S-adenosylmethionine synthase from Staphylococcus aureus (strain MRSA252).